The chain runs to 161 residues: 2-C-methyl-D-erythritol 2,4-cyclodiphosphate synthase (161 aa).

A divalent metal cation is bound by residues Asp10 and His12. Residues 10–12 (DVH) and 36–37 (HS) contribute to the 4-CDP-2-C-methyl-D-erythritol 2-phosphate site. His44 contributes to the a divalent metal cation binding site. Residues 58–60 (DIG), 63–67 (FPDTD), 102–108 (AQAPKMA), 134–137 (TTTE), Phe141, and Arg144 each bind 4-CDP-2-C-methyl-D-erythritol 2-phosphate.

The protein belongs to the IspF family. As to quaternary structure, homotrimer. A divalent metal cation is required as a cofactor.

It catalyses the reaction 4-CDP-2-C-methyl-D-erythritol 2-phosphate = 2-C-methyl-D-erythritol 2,4-cyclic diphosphate + CMP. It participates in isoprenoid biosynthesis; isopentenyl diphosphate biosynthesis via DXP pathway; isopentenyl diphosphate from 1-deoxy-D-xylulose 5-phosphate: step 4/6. In terms of biological role, involved in the biosynthesis of isopentenyl diphosphate (IPP) and dimethylallyl diphosphate (DMAPP), two major building blocks of isoprenoid compounds. Catalyzes the conversion of 4-diphosphocytidyl-2-C-methyl-D-erythritol 2-phosphate (CDP-ME2P) to 2-C-methyl-D-erythritol 2,4-cyclodiphosphate (ME-CPP) with a corresponding release of cytidine 5-monophosphate (CMP). This chain is 2-C-methyl-D-erythritol 2,4-cyclodiphosphate synthase, found in Shewanella sediminis (strain HAW-EB3).